A 328-amino-acid polypeptide reads, in one-letter code: Nucleotide-binding protein Blon_1085/BLIJ_1109 (328 aa).

Residues Met-1–Pro-33 are disordered. The segment covering Ala-13 to Pro-29 has biased composition (low complexity). Gly-46 to Ser-53 provides a ligand contact to ATP. Asp-101–Ser-104 is a GTP binding site.

Belongs to the RapZ-like family.

Displays ATPase and GTPase activities. This Bifidobacterium longum subsp. infantis (strain ATCC 15697 / DSM 20088 / JCM 1222 / NCTC 11817 / S12) protein is Nucleotide-binding protein Blon_1085/BLIJ_1109.